A 254-amino-acid chain; its full sequence is Adenosine 5'-phosphosulfate reductase (254 aa).

[4Fe-4S] cluster-binding residues include Cys140, Cys141, Cys223, and Cys226. Catalysis depends on Cys249, which acts as the Nucleophile; cysteine thiosulfonate intermediate.

Belongs to the PAPS reductase family. CysH subfamily. The cofactor is [4Fe-4S] cluster.

Its subcellular location is the cytoplasm. It catalyses the reaction [thioredoxin]-disulfide + sulfite + AMP + 2 H(+) = adenosine 5'-phosphosulfate + [thioredoxin]-dithiol. The protein operates within sulfur metabolism; hydrogen sulfide biosynthesis; sulfite from sulfate. Catalyzes the formation of sulfite from adenosine 5'-phosphosulfate (APS) using thioredoxin as an electron donor. The polypeptide is Adenosine 5'-phosphosulfate reductase (Mycobacterium bovis (strain ATCC BAA-935 / AF2122/97)).